The following is a 287-amino-acid chain: 4-hydroxybenzoate octaprenyltransferase (287 aa).

5 consecutive transmembrane segments (helical) span residues 20-38 (IGTL…FAAG), 95-115 (IVFL…NPLV), 211-231 (IIAA…LIAE), 235-255 (IYGG…KLIF), and 266-286 (FLNN…DYLV).

It belongs to the UbiA prenyltransferase family. Mg(2+) is required as a cofactor.

The protein localises to the cell inner membrane. It catalyses the reaction all-trans-octaprenyl diphosphate + 4-hydroxybenzoate = 4-hydroxy-3-(all-trans-octaprenyl)benzoate + diphosphate. Its pathway is cofactor biosynthesis; ubiquinone biosynthesis. Catalyzes the prenylation of para-hydroxybenzoate (PHB) with an all-trans polyprenyl group. Mediates the second step in the final reaction sequence of ubiquinone-8 (UQ-8) biosynthesis, which is the condensation of the polyisoprenoid side chain with PHB, generating the first membrane-bound Q intermediate 3-octaprenyl-4-hydroxybenzoate. This chain is 4-hydroxybenzoate octaprenyltransferase, found in Shewanella piezotolerans (strain WP3 / JCM 13877).